Reading from the N-terminus, the 368-residue chain is Probable dual-specificity RNA methyltransferase RlmN (368 aa).

Glutamate 100 acts as the Proton acceptor in catalysis. The Radical SAM core domain maps to glutamine 106–aspartate 344. The cysteines at positions 113 and 349 are disulfide-linked. 3 residues coordinate [4Fe-4S] cluster: cysteine 120, cysteine 124, and cysteine 127. S-adenosyl-L-methionine-binding positions include glycine 172–glutamate 173, serine 204, serine 227–histidine 229, and asparagine 305. Catalysis depends on cysteine 349, which acts as the S-methylcysteine intermediate.

The protein belongs to the radical SAM superfamily. RlmN family. [4Fe-4S] cluster serves as cofactor.

It is found in the cytoplasm. It catalyses the reaction adenosine(2503) in 23S rRNA + 2 reduced [2Fe-2S]-[ferredoxin] + 2 S-adenosyl-L-methionine = 2-methyladenosine(2503) in 23S rRNA + 5'-deoxyadenosine + L-methionine + 2 oxidized [2Fe-2S]-[ferredoxin] + S-adenosyl-L-homocysteine. It carries out the reaction adenosine(37) in tRNA + 2 reduced [2Fe-2S]-[ferredoxin] + 2 S-adenosyl-L-methionine = 2-methyladenosine(37) in tRNA + 5'-deoxyadenosine + L-methionine + 2 oxidized [2Fe-2S]-[ferredoxin] + S-adenosyl-L-homocysteine. In terms of biological role, specifically methylates position 2 of adenine 2503 in 23S rRNA and position 2 of adenine 37 in tRNAs. The sequence is that of Probable dual-specificity RNA methyltransferase RlmN from Streptococcus agalactiae serotype III (strain NEM316).